The chain runs to 89 residues: Large ribosomal subunit protein bL27 (89 aa).

The interval 1–21 (MAHKKAGGSSRNGRDSQSKRL) is disordered.

It belongs to the bacterial ribosomal protein bL27 family.

This is Large ribosomal subunit protein bL27 from Rhizobium rhizogenes (strain K84 / ATCC BAA-868) (Agrobacterium radiobacter).